A 206-amino-acid chain; its full sequence is uncharacterized protein (206 aa).

Disordered stretches follow at residues 64–123 (NTES…DPSL) and 155–206 (VTTP…SSGG). The span at 66–79 (ESTQKTATTQQQGL) shows a compositional bias: polar residues. The segment covering 97-107 (AENNAQANQSE) has biased composition (low complexity). Over residues 108–118 (NRAESTTKAES) the composition is skewed to basic and acidic residues. Residues 155–167 (VTTPTGQVVQPQT) are compositionally biased toward low complexity. Residues 182–198 (GSMNSKPVSRGGFSSPN) are compositionally biased toward polar residues.

This is an uncharacterized protein from Haemophilus influenzae (strain ATCC 51907 / DSM 11121 / KW20 / Rd).